The sequence spans 336 residues: Ribosomal RNA small subunit methyltransferase C (336 aa).

It belongs to the methyltransferase superfamily. RsmC family. As to quaternary structure, monomer.

It localises to the cytoplasm. It carries out the reaction guanosine(1207) in 16S rRNA + S-adenosyl-L-methionine = N(2)-methylguanosine(1207) in 16S rRNA + S-adenosyl-L-homocysteine + H(+). Specifically methylates the guanine in position 1207 of 16S rRNA in the 30S particle. In Hamiltonella defensa subsp. Acyrthosiphon pisum (strain 5AT), this protein is Ribosomal RNA small subunit methyltransferase C.